Reading from the N-terminus, the 313-residue chain is Putative S-adenosyl-L-methionine-dependent methyltransferase MAP_3563 (313 aa).

Residues Asp-139 and 168-169 (DL) each bind S-adenosyl-L-methionine.

The protein belongs to the UPF0677 family.

In terms of biological role, exhibits S-adenosyl-L-methionine-dependent methyltransferase activity. The polypeptide is Putative S-adenosyl-L-methionine-dependent methyltransferase MAP_3563 (Mycolicibacterium paratuberculosis (strain ATCC BAA-968 / K-10) (Mycobacterium paratuberculosis)).